A 381-amino-acid polypeptide reads, in one-letter code: Cytochrome b (381 aa).

Transmembrane regions (helical) follow at residues 31-51 (FGFLSSICLIVQILTGIFLAM), 75-97 (WLLRYIHTNGASMFFIVVYIHIF), 112-132 (VWVIGVLILLLMILTAFIGYV), and 178-198 (FFSLHYLMPFVIAAVSLVHLA). Heme b-binding residues include His-81 and His-95. Positions 182 and 196 each coordinate heme b. His-201 serves as a coordination point for a ubiquinone. The next 4 helical transmembrane spans lie at 224-244 (FIVKDFLGMVIFIIFFSIFVY), 288-308 (LGGVTAMISAIAILAFLPWIH), 320-340 (LYRLFYWVMISCCLILGWIGG), and 347-367 (YVIIGQIASIYYFIYFIILLP).

The protein belongs to the cytochrome b family. As to quaternary structure, the main subunits of complex b-c1 are: cytochrome b, cytochrome c1 and the Rieske protein. It depends on heme b as a cofactor.

It localises to the mitochondrion inner membrane. In terms of biological role, component of the ubiquinol-cytochrome c reductase complex (complex III or cytochrome b-c1 complex) that is part of the mitochondrial respiratory chain. The b-c1 complex mediates electron transfer from ubiquinol to cytochrome c. Contributes to the generation of a proton gradient across the mitochondrial membrane that is then used for ATP synthesis. The chain is Cytochrome b (MT-CYB) from Chondrus crispus (Carrageen Irish moss).